We begin with the raw amino-acid sequence, 132 residues long: MDLPYYHGCLTKRECEALLLKGGVDGNFLIRDSESVPGALCLCVSFKKLVYNYRIFREKNGYYRIETEPSTPKTIFPNLEELISKFKTPGQGMVVHLSNPIMRSGFCPGARRLNLEANVYENTDEEYVDVLP.

Residues 5-101 form the SH2 domain; sequence YYHGCLTKRE…GMVVHLSNPI (97 aa).

As to quaternary structure, interacts with SLAMF1 (phosphorylated). Interacts with CD244. Interacts with Src kinases HCK, LYN, FYN, FGR and LCK (via kinase domains). Expressed in spleen. Expressed in macrophages, CD8(+) T-Cells and NK cells. Conflictingly found only in NK cells.

It localises to the cytoplasm. Cytoplasmic adapter regulating receptors of the signaling lymphocytic activation molecule (SLAM) family. In SLAM signaling may cooperate with Sh2d1a/SAP. Plays a role in regulation of effector functions of natural killer (NK) cells by controlling signal transduction through Cd244/2b4. However, conflicting results are reported which may reflect the use of different strain backgrounds. Proposed to act as an inhibitor of Cd244-mediated NK cell function including cytotoxicity and IFN-gamma production, the latter found also by triggering Klra4 and Klrk1 next to Cd244. Seems to positively regulate Cd244- and Cd84-dependent NK cell functions implicating Cd244-mediated phosphorylation of Vav1. The polypeptide is SH2 domain-containing protein 1B2 (Sh2d1b2) (Mus musculus (Mouse)).